We begin with the raw amino-acid sequence, 191 residues long: 3-isopropylmalate dehydratase small subunit (191 aa).

Belongs to the LeuD family. LeuD type 1 subfamily. As to quaternary structure, heterodimer of LeuC and LeuD.

The enzyme catalyses (2R,3S)-3-isopropylmalate = (2S)-2-isopropylmalate. The protein operates within amino-acid biosynthesis; L-leucine biosynthesis; L-leucine from 3-methyl-2-oxobutanoate: step 2/4. Catalyzes the isomerization between 2-isopropylmalate and 3-isopropylmalate, via the formation of 2-isopropylmaleate. In Anaeromyxobacter sp. (strain K), this protein is 3-isopropylmalate dehydratase small subunit.